Consider the following 282-residue polypeptide: UPF0294 protein VIBHAR_03217 (282 aa).

It belongs to the UPF0294 family.

It localises to the cytoplasm. The sequence is that of UPF0294 protein VIBHAR_03217 from Vibrio campbellii (strain ATCC BAA-1116).